We begin with the raw amino-acid sequence, 210 residues long: Peptidyl-tRNA hydrolase (210 aa).

A tRNA-binding site is contributed by tyrosine 30. Histidine 35 functions as the Proton acceptor in the catalytic mechanism. Positions 81, 83, and 129 each coordinate tRNA.

This sequence belongs to the PTH family. As to quaternary structure, monomer.

Its subcellular location is the cytoplasm. It catalyses the reaction an N-acyl-L-alpha-aminoacyl-tRNA + H2O = an N-acyl-L-amino acid + a tRNA + H(+). Its function is as follows. Hydrolyzes ribosome-free peptidyl-tRNAs (with 1 or more amino acids incorporated), which drop off the ribosome during protein synthesis, or as a result of ribosome stalling. In terms of biological role, catalyzes the release of premature peptidyl moieties from peptidyl-tRNA molecules trapped in stalled 50S ribosomal subunits, and thus maintains levels of free tRNAs and 50S ribosomes. The chain is Peptidyl-tRNA hydrolase from Bordetella petrii (strain ATCC BAA-461 / DSM 12804 / CCUG 43448).